The chain runs to 122 residues: Small ribosomal subunit protein uS13 (122 aa).

The segment at 95–122 (GLPVHGQRTHTNARTRKGPRRGAVGKKK) is disordered.

Belongs to the universal ribosomal protein uS13 family. Part of the 30S ribosomal subunit. Forms a loose heterodimer with protein S19. Forms two bridges to the 50S subunit in the 70S ribosome.

Located at the top of the head of the 30S subunit, it contacts several helices of the 16S rRNA. In the 70S ribosome it contacts the 23S rRNA (bridge B1a) and protein L5 of the 50S subunit (bridge B1b), connecting the 2 subunits; these bridges are implicated in subunit movement. Contacts the tRNAs in the A and P-sites. In Nitratidesulfovibrio vulgaris (strain DSM 19637 / Miyazaki F) (Desulfovibrio vulgaris), this protein is Small ribosomal subunit protein uS13.